Reading from the N-terminus, the 88-residue chain is Putative membrane protein insertion efficiency factor (88 aa).

This sequence belongs to the UPF0161 family.

The protein localises to the cell inner membrane. Functionally, could be involved in insertion of integral membrane proteins into the membrane. In Koribacter versatilis (strain Ellin345), this protein is Putative membrane protein insertion efficiency factor.